Reading from the N-terminus, the 347-residue chain is Protein-glutamate methylesterase/protein-glutamine glutaminase 4 (347 aa).

The region spanning 3 to 121 is the Response regulatory domain; the sequence is KVLIVDDSAS…HPNHEREARS (119 aa). D54 bears the 4-aspartylphosphate mark. The region spanning 157 to 342 is the CheB-type methylesterase domain; it reads PARLKAVAIG…PDRIVTALTS (186 aa). Residues S168, H195, and D289 contribute to the active site.

It belongs to the CheB family. Phosphorylated by CheA. Phosphorylation of the N-terminal regulatory domain activates the methylesterase activity.

The protein localises to the cytoplasm. It carries out the reaction [protein]-L-glutamate 5-O-methyl ester + H2O = L-glutamyl-[protein] + methanol + H(+). It catalyses the reaction L-glutaminyl-[protein] + H2O = L-glutamyl-[protein] + NH4(+). In terms of biological role, involved in chemotaxis. Part of a chemotaxis signal transduction system that modulates chemotaxis in response to various stimuli. Catalyzes the demethylation of specific methylglutamate residues introduced into the chemoreceptors (methyl-accepting chemotaxis proteins or MCP) by CheR. Also mediates the irreversible deamidation of specific glutamine residues to glutamic acid. In Geobacter metallireducens (strain ATCC 53774 / DSM 7210 / GS-15), this protein is Protein-glutamate methylesterase/protein-glutamine glutaminase 4.